A 100-amino-acid polypeptide reads, in one-letter code: NADH-quinone oxidoreductase subunit K (100 aa).

Helical transmembrane passes span 1–21 (MIGLNHYLIVSGLLFCIGLAG), 28–48 (ILLLFFSTEIMLNAINIGFIA), and 64–84 (FIIAIAASEVAIGLGLVILWF).

The protein belongs to the complex I subunit 4L family. As to quaternary structure, NDH-1 is composed of 14 different subunits. Subunits NuoA, H, J, K, L, M, N constitute the membrane sector of the complex.

The protein localises to the cell inner membrane. It carries out the reaction a quinone + NADH + 5 H(+)(in) = a quinol + NAD(+) + 4 H(+)(out). Its function is as follows. NDH-1 shuttles electrons from NADH, via FMN and iron-sulfur (Fe-S) centers, to quinones in the respiratory chain. The immediate electron acceptor for the enzyme in this species is believed to be ubiquinone. Couples the redox reaction to proton translocation (for every two electrons transferred, four hydrogen ions are translocated across the cytoplasmic membrane), and thus conserves the redox energy in a proton gradient. In Helicobacter acinonychis (strain Sheeba), this protein is NADH-quinone oxidoreductase subunit K.